A 659-amino-acid chain; its full sequence is MGSSSLLLFPSSSSSATHSSYSPSSSSHAITSLLPPLPSDHHLLLYLDHQEQHHLAAAMVRKRPASDMDLPPPRRHVTGDLSDVTAAAAPSSASAQLPALPTQLPAFHHTDMDLAAPAPPPPQQQVAAGEGGPPSTAWVDGIIRDIIASSGAAVSVAQLIHNVREIIRPCNPDLASILELRLRSLLTSDPAPPPPPPPSHPALLPPDATAPPPPPTSVAALPPPPPPQPDKRRREPQCQEQEPNQPQSPKPPTAEETAAAAAAAAAAALAAAKERKEEQRRKQRDEEGLHLLTLLLQCAESVNADNLDEAHRALLEIAELATPFGTSTQRVAAYFAEAMSARLVSSCLGLYAPLPNPSPAAARLHGRVAAAFQVFNGISPFVKFSHFTANQAIQEAFEREERVHIIDLDIMQGLQWPGLFHILASRPGGPPRVRLTGLGASMEALEATGKRLSDFADTLGLPFEFCPVADKAGNLDPEKLGVTRREAVAVHWLRHSLYDVTGSDSNTLWLIQRLAPKVVTMVEQDLSHSGSFLARFVEAIHYYSALFDSLDASYSEDSPERHVVEQQLLSREIRNVLAVGGPARTGDVKFGSWREKLAQSGFRVSSLAGSAAAQAALLLGMFPSDGYTLIEENGALKLGWKDLCLLTASAWRPIQASGR.

Disordered regions lie at residues 1–33 (MGSS…ITSL) and 188–285 (SDPA…KQRD). Pro residues predominate over residues 190–228 (PAPPPPPPPSHPALLPPDATAPPPPPTSVAALPPPPPPQ). Residues 258–271 (AAAAAAAAAAALAA) are compositionally biased toward low complexity. Positions 258 to 289 (AAAAAAAAAAALAAAKERKEEQRRKQRDEEGL) form a coiled coil. Positions 272-285 (AKERKEEQRRKQRD) are enriched in basic and acidic residues. In terms of domain architecture, GRAS spans 282–652 (KQRDEEGLHL…LCLLTASAWR (371 aa)). Positions 289–353 (LHLLTLLLQC…VSSCLGLYAP (65 aa)) are leucine repeat I (LRI). The LxCxE motif motif lies at 296-300 (LQCAE). Residues 372 to 437 (FQVFNGISPF…GGPPRVRLTG (66 aa)) are VHIID. The short motif at 403 to 407 (VHIID) is the VHIID element. A leucine repeat II (LRII) region spans residues 447-479 (ATGKRLSDFADTLGLPFEFCPVADKAGNLDPEK). Positions 488–575 (VAVHWLRHSL…QQLLSREIRN (88 aa)) are PFYRE. Positions 578–652 (AVGGPARTGD…LCLLTASAWR (75 aa)) are SAW.

This sequence belongs to the GRAS family. In terms of assembly, interacts with SHR1, but not with SHR2.

Its subcellular location is the nucleus. Functionally, transcription factor required for quiescent center cells specification and maintenance of surrounding stem cells, and for the asymmetric cell division involved in radial pattern formation in roots. Essential for cell division but not differentiation of the ground tissue. Regulates the radial organization of the shoot axial organs. Restricts SHR movment and sequesters it into the nucleus of the endodermis. This chain is Protein SCARECROW 1 (SCR1), found in Oryza sativa subsp. indica (Rice).